A 352-amino-acid chain; its full sequence is Small ribosomal subunit biogenesis GTPase RsgA (352 aa).

Over residues 1–21 the composition is skewed to basic residues; the sequence is MKKNKLSKNQHRRIQAHHQYR. The segment at 1–38 is disordered; it reads MKKNKLSKNQHRRIQAHHQYRLHPTSLTDDKNNQLDDA. In terms of domain architecture, CP-type G spans 116 to 278; the sequence is FYDGIKPMAA…LIDSPGIREF (163 aa). Residues 164–167 and 218–226 each bind GTP; these read NKID and GQSGVGKSS. Zn(2+) is bound by residues Cys-302, Cys-307, His-309, and Cys-315.

This sequence belongs to the TRAFAC class YlqF/YawG GTPase family. RsgA subfamily. In terms of assembly, monomer. Associates with 30S ribosomal subunit, binds 16S rRNA. Requires Zn(2+) as cofactor.

It is found in the cytoplasm. One of several proteins that assist in the late maturation steps of the functional core of the 30S ribosomal subunit. Helps release RbfA from mature subunits. May play a role in the assembly of ribosomal proteins into the subunit. Circularly permuted GTPase that catalyzes slow GTP hydrolysis, GTPase activity is stimulated by the 30S ribosomal subunit. The protein is Small ribosomal subunit biogenesis GTPase RsgA of Hamiltonella defensa subsp. Acyrthosiphon pisum (strain 5AT).